The chain runs to 98 residues: DNA-binding protein Fis (98 aa).

Positions 74–93 form a DNA-binding region, H-T-H motif; sequence QTRAAQMMGINRGTLRKKLK.

Belongs to the transcriptional regulatory Fis family. Homodimer.

Its function is as follows. Activates ribosomal RNA transcription. Plays a direct role in upstream activation of rRNA promoters. This Sodalis glossinidius (strain morsitans) protein is DNA-binding protein Fis.